The chain runs to 61 residues: Large ribosomal subunit protein uL30 (61 aa).

This sequence belongs to the universal ribosomal protein uL30 family. As to quaternary structure, part of the 50S ribosomal subunit.

This is Large ribosomal subunit protein uL30 from Nitrosomonas europaea (strain ATCC 19718 / CIP 103999 / KCTC 2705 / NBRC 14298).